A 372-amino-acid chain; its full sequence is N-methyl-L-tryptophan oxidase (372 aa).

4–34 is a binding site for FAD; it reads DLIIIGSGSVGAAAGYYATRAGLNVLMTDAH. Cysteine 308 carries the S-8alpha-FAD cysteine modification.

This sequence belongs to the MSOX/MTOX family. MTOX subfamily. Monomer. The cofactor is FAD.

It carries out the reaction N(alpha)-methyl-L-tryptophan + O2 + H2O = L-tryptophan + formaldehyde + H2O2. In terms of biological role, catalyzes the oxidative demethylation of N-methyl-L-tryptophan. This chain is N-methyl-L-tryptophan oxidase, found in Escherichia coli (strain SMS-3-5 / SECEC).